A 969-amino-acid polypeptide reads, in one-letter code: MSEQANSSGIESLSNGLRERNAQTSKPIGDGEVTSQSLEDKLQIEEGDAADAEKKTFGRTPDGKVFTVPPTRDMVSQLLSPSEPKNISDIFVLAILGCHILLLWCLPSSFRIAAFAVIFLFWRASYNIGIGWLLHMQSNGRTLVCWAKKSNIFVNPSTGQNPHPTLYKMLKWELETKISEQYSFDEAPTEYNTWLVFRRVVDLILMCDFTSYCLFAIACGGRPAGESFIMLALRWTTGMSLVLFNLWVKLDAHRVVKDFAWYWGDFFYLIDQELTFDGVFEMAPHPMYSVGYAGYYGISLMAASYKVLFISILAHAAQFAFLVLVENPHIEKTYNVPPPRKRVAVDTDTKLQEDENSHEGSVVSDIANSAPVMPALQPVSMHNLLGLHNIDLYRSTDQSVLLAQLLFFALTTMTPSTPVYQFCFVLNAALWRIWYSVGIGYILNRQSNCKMWTRHFVKYGESNHEAWRQWKGTYHLSMTMTYASFIAAAWKMYSFPQDWGYGLVLLRHILGASLIALQIWTSSSIYESLGEFGWFFGDFFFDQSPKLTYSGIYRFLNNPERVLGLAGVWGAVLITSTKSLVFLALLSHTLTLAFIQLVERPHMQKLYGQSLRRDAGLVRSLKRSLPPSLKQIHGSVDKILDESFEFIEEFIEAARPKLATGVQTFVKDTSALFQKYPARVTISRLEPDLAGYDLKDYSITLEGTQPSQPAQFERASDKEGERARSMQFRRGEQENLIFEYGAPIKVKWTAPLNHSKKDWIGLYMVTDNTSREVTSVASQGRWIATNQASFDSETCEQGLISSDIVLKITREDCEPIDVASGEMVFSGDKLWWTQGVFEFRYHHNGKHNVMAVSRPFEIRIGRFDEDIVEADNYGLVRAAVEAALLPVVQNCFDRDPEIAPQTAEEHYGCLVERDGKYSKRVVFAVQHIVRADGNVRNLAWRICNAKKVLAPYSMSRSNGASTPTTEHED.

A compositionally biased stretch (polar residues) spans 1-15 (MSEQANSSGIESLSN). The interval 1-40 (MSEQANSSGIESLSNGLRERNAQTSKPIGDGEVTSQSLED) is disordered. Over 1–89 (MSEQANSSGI…SPSEPKNISD (89 aa)) the chain is Lumenal. A helical membrane pass occupies residues 90–110 (IFVLAILGCHILLLWCLPSSF). The Cytoplasmic segment spans residues 111–113 (RIA). A helical transmembrane segment spans residues 114 to 134 (AFAVIFLFWRASYNIGIGWLL). At 135 to 199 (HMQSNGRTLV…EYNTWLVFRR (65 aa)) the chain is on the lumenal side. A helical transmembrane segment spans residues 200-220 (VVDLILMCDFTSYCLFAIACG). Over 221–227 (GRPAGES) the chain is Cytoplasmic. The helical transmembrane segment at 228 to 248 (FIMLALRWTTGMSLVLFNLWV) threads the bilayer. Residues 249-281 (KLDAHRVVKDFAWYWGDFFYLIDQELTFDGVFE) lie on the Lumenal side of the membrane. Residues 282 to 302 (MAPHPMYSVGYAGYYGISLMA) form a helical membrane-spanning segment. At 303–304 (AS) the chain is on the cytoplasmic side. Residues 305–325 (YKVLFISILAHAAQFAFLVLV) traverse the membrane as a helical segment. Residues 326–399 (ENPHIEKTYN…IDLYRSTDQS (74 aa)) are Lumenal-facing. Residues 400–420 (VLLAQLLFFALTTMTPSTPVY) traverse the membrane as a helical segment. Gln-421 is a topological domain (cytoplasmic). A helical membrane pass occupies residues 422-442 (FCFVLNAALWRIWYSVGIGYI). At 443-473 (LNRQSNCKMWTRHFVKYGESNHEAWRQWKGT) the chain is on the lumenal side. Residues 474–493 (YHLSMTMTYASFIAAAWKMY) form a helical membrane-spanning segment. At 494–498 (SFPQD) the chain is on the cytoplasmic side. A helical transmembrane segment spans residues 499-519 (WGYGLVLLRHILGASLIALQI). Residues 520–564 (WTSSSIYESLGEFGWFFGDFFFDQSPKLTYSGIYRFLNNPERVLG) are Lumenal-facing. A helical membrane pass occupies residues 565–585 (LAGVWGAVLITSTKSLVFLAL). The Cytoplasmic segment spans residues 586 to 969 (LSHTLTLAFI…ASTPTTEHED (384 aa)). Positions 705-725 (QPSQPAQFERASDKEGERARS) are disordered. Basic and acidic residues predominate over residues 714-725 (RASDKEGERARS).

The protein belongs to the class VI-like SAM-binding methyltransferase superfamily. CHO2 family.

The protein localises to the endoplasmic reticulum membrane. The catalysed reaction is a 1,2-diacyl-sn-glycero-3-phosphoethanolamine + S-adenosyl-L-methionine = a 1,2-diacyl-sn-glycero-3-phospho-N-methylethanolamine + S-adenosyl-L-homocysteine + H(+). The protein operates within phospholipid metabolism; phosphatidylcholine biosynthesis. In terms of biological role, catalyzes the first step of the methylation pathway of phosphatidylcholine biosynthesis, the SAM-dependent methylation of phosphatidylethanolamine (PE) to phosphatidylmonomethylethanolamine (PMME). This is Phosphatidylethanolamine N-methyltransferase (CHO2) from Ajellomyces capsulatus (strain H143) (Darling's disease fungus).